We begin with the raw amino-acid sequence, 389 residues long: Chalcone synthase 2 (389 aa).

C164 is an active-site residue.

Belongs to the thiolase-like superfamily. Chalcone/stilbene synthases family.

It carries out the reaction (E)-4-coumaroyl-CoA + 3 malonyl-CoA + 3 H(+) = 2',4,4',6'-tetrahydroxychalcone + 3 CO2 + 4 CoA. It functions in the pathway secondary metabolite biosynthesis; flavonoid biosynthesis. Its function is as follows. The primary product of this enzyme is 4,2',4',6'-tetrahydroxychalcone (also termed naringenin-chalcone or chalcone) which can under specific conditions spontaneously isomerize into naringenin. This is Chalcone synthase 2 (CHS2) from Pisum sativum (Garden pea).